The chain runs to 197 residues: Peptide deformylase (197 aa).

Cysteine 106 and histidine 148 together coordinate Fe cation. Glutamate 149 is a catalytic residue. Histidine 152 provides a ligand contact to Fe cation.

It belongs to the polypeptide deformylase family. Requires Fe(2+) as cofactor.

The enzyme catalyses N-terminal N-formyl-L-methionyl-[peptide] + H2O = N-terminal L-methionyl-[peptide] + formate. Removes the formyl group from the N-terminal Met of newly synthesized proteins. Requires at least a dipeptide for an efficient rate of reaction. N-terminal L-methionine is a prerequisite for activity but the enzyme has broad specificity at other positions. This chain is Peptide deformylase, found in Mycolicibacterium paratuberculosis (strain ATCC BAA-968 / K-10) (Mycobacterium paratuberculosis).